Reading from the N-terminus, the 110-residue chain is UPF0122 protein BPUM_1495 (110 aa).

This sequence belongs to the UPF0122 family.

Functionally, might take part in the signal recognition particle (SRP) pathway. This is inferred from the conservation of its genetic proximity to ftsY/ffh. May be a regulatory protein. This chain is UPF0122 protein BPUM_1495, found in Bacillus pumilus (strain SAFR-032).